The following is a 180-amino-acid chain: Cytokinin-beta-glucosidase 1 (180 aa).

Its function is as follows. Hydrolyzes cytokinin glucosides thus liberating free cytokinins. The protein is Cytokinin-beta-glucosidase 1 (ROLC1) of Linaria vulgaris (Toadflax).